The primary structure comprises 165 residues: HTH-type transcriptional regulator IscR (165 aa).

Residues 2–131 (RLTSKGRYAV…NNITLAELVS (130 aa)) form the HTH rrf2-type domain. Residues 28–51 (LAEISERQGISLSYLEQLFSRLRK) constitute a DNA-binding region (H-T-H motif). Residues C92, C98, and C104 each contribute to the [2Fe-2S] cluster site. The tract at residues 144–165 (NDTRRPLTNGRPQETINVNLHA) is disordered. Residues 153–165 (GRPQETINVNLHA) show a composition bias toward polar residues.

The cofactor is [2Fe-2S] cluster.

Functionally, regulates the transcription of several operons and genes involved in the biogenesis of Fe-S clusters and Fe-S-containing proteins. The chain is HTH-type transcriptional regulator IscR from Sodalis glossinidius (strain morsitans).